The sequence spans 1010 residues: Plasma membrane ATPase 2 (1010 aa).

Basic and acidic residues predominate over residues 1-14 (MQRNNGEGRPEGMH). Disordered stretches follow at residues 1–126 (MQRN…EDED) and 139–165 (QDQE…PEEL). Over 1–201 (MQRNNGEGRP…KEEKTNNIKK (201 aa)) the chain is Cytoplasmic. Residues 25–34 (FKNNASPQDD) show a composition bias toward polar residues. The segment covering 42-52 (YEEGGVEDSAV) has biased composition (acidic residues). Positions 68–106 (APNTHAQQANLQSGNTSITHETQSTSRGQEATTSPSLSA) are enriched in polar residues. A compositionally biased stretch (acidic residues) spans 140–151 (DQEEEQVEEEES). Residues 202–222 (FLSFFVGPIQFVMELAAALAA) traverse the membrane as a helical segment. Residues 223–226 (GLRD) lie on the Extracellular side of the membrane. Residues 227 to 246 (WVDFGVICALLLLNATVGFV) form a helical membrane-spanning segment. The Cytoplasmic portion of the chain corresponds to 247-377 (QEYQAGSIVD…SQGHFTEVLN (131 aa)). Residues 378-399 (GIGTILLVLVILTLLCIYTAAF) traverse the membrane as a helical segment. Topologically, residues 400–410 (YRSVRLAALLE) are extracellular. The chain crosses the membrane as a helical span at residues 411-433 (YTLAITIIGVPVGLPAVVTTTMA). Residues 434-805 (VGAAYLAKKK…LIIRNQLLNL (372 aa)) are Cytoplasmic-facing. Residue aspartate 464 is the 4-aspartylphosphate intermediate of the active site. The Mg(2+) site is built by aspartate 720 and aspartate 724. The helical transmembrane segment at 806 to 824 (ELIVFIAIFADVATLAIAY) threads the bilayer. The Extracellular portion of the chain corresponds to 825-840 (DNAPYAMKPVKWNLPR). A helical transmembrane segment spans residues 841–860 (LWGLATIVGILLAIGTWIVN). At 861 to 912 (TTMIAQGQNRGIVQNFGVQDEVLFLQISLTENWLIFITRCSGPFWSSFPSWQ) the chain is on the cytoplasmic side. A helical transmembrane segment spans residues 913-933 (LSGAVLVVDILATLFCIFGWF). The Extracellular portion of the chain corresponds to 934–946 (KGGHQTSIVAVIR). The chain crosses the membrane as a helical span at residues 947–963 (IWMYSFGIFCLIAGVYY). Residues 964-1010 (ILSESSSFDRWMHGKHKERGTTRKLEDFVMQLQRTSTHHEAEGKVTS) are Cytoplasmic-facing.

Belongs to the cation transport ATPase (P-type) (TC 3.A.3) family. Type IIIA subfamily. In addition to transient phosphorylation of the active site Asp residue, this protein, but not the product of the pma1 locus, is phosphorylated efficiently in isolated plasma membrane.

It is found in the cell membrane. It catalyses the reaction ATP + H2O + H(+)(in) = ADP + phosphate + 2 H(+)(out). Functionally, the plasma membrane ATPase of plants and fungi is a hydrogen ion pump. The proton gradient it generates drives the active transport of nutrients by H(+)-symport. The resulting external acidification and/or internal alkinization may mediate growth responses. This is Plasma membrane ATPase 2 (pma2) from Schizosaccharomyces pombe (strain 972 / ATCC 24843) (Fission yeast).